We begin with the raw amino-acid sequence, 762 residues long: Alpha-xylosidase XylQ (762 aa).

Catalysis depends on D414, which acts as the Nucleophile. The active site involves E417.

This sequence belongs to the glycosyl hydrolase 31 family.

It is found in the cell membrane. It catalyses the reaction Hydrolysis of terminal, non-reducing alpha-D-xylose residues with release of alpha-D-xylose.. In terms of biological role, involved in the metabolism of isoprimeverose. Hydrolyzes isoprimeverose into equimolar amounts of glucose and xylose. In vitro, can also use p-nitrophenyl-alpha-D-xylopyranoside (alpha-p-NPX). In Lactiplantibacillus pentosus (Lactobacillus pentosus), this protein is Alpha-xylosidase XylQ.